Consider the following 549-residue polypeptide: Probable protein kinase UbiB (549 aa).

Positions 123-501 constitute a Protein kinase domain; that stretch reads DFNDTPLASA…QQKSHKSNYL (379 aa). ATP contacts are provided by residues 129-137 and Lys-152; that span reads LASASISQV. The active-site Proton acceptor is the Asp-287. The next 2 membrane-spanning stretches (helical) occupy residues 498–518 and 519–539; these read SNYLLITSAVLLICGTILFTQ and IVTLWPAYTCIGAGILIWAIG.

It belongs to the ABC1 family. UbiB subfamily.

The protein resides in the cell inner membrane. It participates in cofactor biosynthesis; ubiquinone biosynthesis [regulation]. Functionally, is probably a protein kinase regulator of UbiI activity which is involved in aerobic coenzyme Q (ubiquinone) biosynthesis. This chain is Probable protein kinase UbiB, found in Shewanella frigidimarina (strain NCIMB 400).